The following is a 100-amino-acid chain: MSFVTTRPDSIGETAANLHEIGVTMSAHDDGVTPLITNVESPAHDLVSIVTSMLFSMHGELYKAIARQAHVIHESFVQTLQTSKTSYWLTELANRAGTST.

Positions 4-94 (VTTRPDSIGE…TSYWLTELAN (91 aa)) constitute a PE domain.

Belongs to the mycobacterial PE family.

The protein localises to the secreted. Its subcellular location is the cell wall. The catalysed reaction is an acetyl ester + H2O = an aliphatic alcohol + acetate + H(+). It carries out the reaction a butanoate ester + H2O = an aliphatic alcohol + butanoate + H(+). It catalyses the reaction an octanoate ester + H2O = an aliphatic alcohol + octanoate + H(+). In terms of biological role, involved in cell wall lipids remodeling and in virulence. Restricts the biofilm growth and is essential for the optimal intracellular survival of M.tuberculosis. Shows esterase activity with a preference for short-chain esters, particularly pNP-acetate (C2) and pNP-butyrate (C4). Has weaker activity with pNP-octanoate (C8), pNP-laurate (C12) and pNP-myristate (C14). Shows weak long-chain triacylglycerol (TAG) hydrolase activity in vitro. Not necessary for PPE17 stability or for its localization on the mycobacterial surface. In Mycobacterium tuberculosis (strain ATCC 25618 / H37Rv), this protein is Esterase PE11.